Consider the following 160-residue polypeptide: UPF0260 protein Rleg2_0895 (160 aa).

Belongs to the UPF0260 family.

The polypeptide is UPF0260 protein Rleg2_0895 (Rhizobium leguminosarum bv. trifolii (strain WSM2304)).